We begin with the raw amino-acid sequence, 453 residues long: Wall-associated protein (453 aa).

The first 29 residues, 1–29 (MKMKRKLLSLVSVLTILLGAFWVTKIVKA), serve as a signal peptide directing secretion. The segment at 331 to 403 (GRASSRVKRQ…TASQTNVPTT (73 aa)) is disordered. The span at 342–403 (ETTTVTETTT…TASQTNVPTT (62 aa)) shows a compositional bias: low complexity. Residues 422–426 (LPSTG) carry the LPXTG sorting signal motif. Pentaglycyl murein peptidoglycan amidated threonine is present on Thr425. The propeptide at 426–453 (GEQAGLLLTTVGLVIVAVAGVYFYRTRR) is removed by sortase.

The protein localises to the secreted. The protein resides in the cell wall. This chain is Wall-associated protein (wapA), found in Streptococcus mutans serotype c (strain ATCC 700610 / UA159).